Reading from the N-terminus, the 249-residue chain is Aquaporin TIP4-3 (249 aa).

2 helical membrane passes run 20–40 (GVLG…GAAM) and 56–76 (TAVA…GFHI). Positions 82-84 (NPA) match the NPA 1 motif. Helical transmembrane passes span 100 to 122 (SSLY…RWLT), 141 to 161 (GVVA…ATIL), and 169 to 189 (GAGP…GAAL). An NPA 2 motif is present at residues 195 to 197 (NPA). A helical membrane pass occupies residues 214–234 (VYWVGPLAGGPLAVLVYECCF).

Belongs to the MIP/aquaporin (TC 1.A.8) family. TIP (TC 1.A.8.10) subfamily.

It is found in the vacuole membrane. Its function is as follows. Aquaporins facilitate the transport of water and small neutral solutes across cell membranes. The chain is Aquaporin TIP4-3 (TIP4-3) from Zea mays (Maize).